The sequence spans 298 residues: Probable endonuclease 4 (298 aa).

Zn(2+) contacts are provided by histidine 69, histidine 111, glutamate 146, aspartate 180, histidine 183, histidine 215, aspartate 228, histidine 230, and glutamate 260.

This sequence belongs to the AP endonuclease 2 family. The cofactor is Zn(2+).

The enzyme catalyses Endonucleolytic cleavage to 5'-phosphooligonucleotide end-products.. Functionally, endonuclease IV plays a role in DNA repair. It cleaves phosphodiester bonds at apurinic or apyrimidinic (AP) sites, generating a 3'-hydroxyl group and a 5'-terminal sugar phosphate. This Bacillus cereus (strain 03BB102) protein is Probable endonuclease 4.